Consider the following 401-residue polypeptide: Hemorrhagic metalloproteinase-disintegrin-like kaouthiagin (401 aa).

The Peptidase M12B domain occupies 14 to 208; the sequence is KYIEFYVIVD…DRPQCILNKP (195 aa). 2 residues coordinate Ca(2+): Glu17 and Asp101. N-linked (GlcNAc...) asparagine glycosylation occurs at Asn112. Intrachain disulfides connect Cys125–Cys203, Cys164–Cys187, and Cys166–Cys171. Position 149 (His149) interacts with Zn(2+). Glu150 is a catalytic residue. Positions 153 and 159 each coordinate Zn(2+). Positions 203, 206, 218, 221, 223, 225, 228, and 231 each coordinate Ca(2+). One can recognise a Disintegrin domain in the interval 216 to 285; it reads PAICGNYFVE…ECPTDSLQRN (70 aa). 11 disulfides stabilise this stretch: Cys219-Cys248, Cys230-Cys243, Cys232-Cys238, Cys257-Cys277, Cys264-Cys296, Cys289-Cys301, Cys308-Cys358, Cys323-Cys366, Cys336-Cys346, Cys353-Cys389, and Cys383-Cys394. Residues 263–265 carry the D/ECD-tripeptide motif; it reads DCD. Ca(2+) contacts are provided by Asp265, Leu266, Glu268, and Asp280.

The protein belongs to the venom metalloproteinase (M12B) family. P-III subfamily. P-IIIa sub-subfamily. As to quaternary structure, monomer. Zn(2+) is required as a cofactor. Expressed by the venom gland.

The protein localises to the secreted. Its function is as follows. Snake venom zinc protease that inhibits hemostasis by binding and cleaving the vWF in humans. Also has and inhibitory effect on the collagen-induced platelet aggregation. This is Hemorrhagic metalloproteinase-disintegrin-like kaouthiagin from Naja kaouthia (Monocled cobra).